The sequence spans 233 residues: Large ribosomal subunit protein uL2 (233 aa).

Residues 195–233 are disordered; it reads PHGGGNHQHVGRPSTVGRNAPPGRKVGRLSPKRRRVNGR. Residues 219–233 are compositionally biased toward basic residues; it reads KVGRLSPKRRRVNGR.

Belongs to the universal ribosomal protein uL2 family. As to quaternary structure, part of the 50S ribosomal subunit. Forms a bridge to the 30S subunit in the 70S ribosome.

One of the primary rRNA binding proteins. Required for association of the 30S and 50S subunits to form the 70S ribosome, for tRNA binding and peptide bond formation. It has been suggested to have peptidyltransferase activity; this is somewhat controversial. Makes several contacts with the 16S rRNA in the 70S ribosome. The sequence is that of Large ribosomal subunit protein uL2 from Thermoplasma acidophilum (strain ATCC 25905 / DSM 1728 / JCM 9062 / NBRC 15155 / AMRC-C165).